A 182-amino-acid chain; its full sequence is Adenine phosphoribosyltransferase (182 aa).

The protein belongs to the purine/pyrimidine phosphoribosyltransferase family. Homodimer.

The protein resides in the cytoplasm. The catalysed reaction is AMP + diphosphate = 5-phospho-alpha-D-ribose 1-diphosphate + adenine. It functions in the pathway purine metabolism; AMP biosynthesis via salvage pathway; AMP from adenine: step 1/1. Its function is as follows. Catalyzes a salvage reaction resulting in the formation of AMP, that is energically less costly than de novo synthesis. The chain is Adenine phosphoribosyltransferase from Shewanella frigidimarina (strain NCIMB 400).